Consider the following 357-residue polypeptide: MKRYKVVLLSGDGIGPEISEISITILKKLSKKYGFNLDIKEEYFGGIAYEKHNDPAPKETLDQCKASDAVLLACVGDVKYDTLPRELRPESGLLKLREALNLFANIRPVKIRKSLLDSSSFKKEVIENVDLIVVRELIGGIYFGQPRGEITQTKIKKAFNTMVYDSNEIERITEVAIKIANQRSKKICSVDKSNVLEVSQLWRDTVSLVASKENDLALSNMYVDNAAMQLVKDPGQFDVILTSNLFGDILSDLAAMITGSIGMLPSASLSNSGPGVFEPVHGSAPDIAGKNIANPIAMALSTSMMLKIGLNEIEAADDIEIAIDNVLSKGYRTSDLDNGNCQVLSCSEIGEKIIQEI.

Residues arginine 97, arginine 107, arginine 135, and aspartate 224 each contribute to the substrate site. Mg(2+) contacts are provided by aspartate 224, aspartate 248, and aspartate 252. Position 282 to 294 (282 to 294 (GSAPDIAGKNIAN)) interacts with NAD(+).

Belongs to the isocitrate and isopropylmalate dehydrogenases family. LeuB type 1 subfamily. Homodimer. Mg(2+) serves as cofactor. Requires Mn(2+) as cofactor.

It localises to the cytoplasm. It catalyses the reaction (2R,3S)-3-isopropylmalate + NAD(+) = 4-methyl-2-oxopentanoate + CO2 + NADH. The protein operates within amino-acid biosynthesis; L-leucine biosynthesis; L-leucine from 3-methyl-2-oxobutanoate: step 3/4. In terms of biological role, catalyzes the oxidation of 3-carboxy-2-hydroxy-4-methylpentanoate (3-isopropylmalate) to 3-carboxy-4-methyl-2-oxopentanoate. The product decarboxylates to 4-methyl-2 oxopentanoate. In Prochlorococcus marinus subsp. pastoris (strain CCMP1986 / NIES-2087 / MED4), this protein is 3-isopropylmalate dehydrogenase.